Reading from the N-terminus, the 308-residue chain is Membrane protein insertase YidC 1 (308 aa).

An N-terminal signal peptide occupies residues 1 to 22; the sequence is MKSIKRFALSAMGVAMLLVLTG. A lipid anchor (N-palmitoyl cysteine) is attached at C23. C23 carries S-diacylglycerol cysteine lipidation. Helical transmembrane passes span 60–80, 135–155, 168–188, 211–226, and 232–252; these read FGVA…PLGI, FGGV…AIYF, YLGI…GVLY, MIYM…SLFS, and LYWV…NYIV. The segment at 263 to 308 is disordered; that stretch reads ELAKNPPKASAFSKPSGRKDVTPEQPTAITSKKKHKNRNAGKQRSR. A compositionally biased stretch (basic residues) spans 293 to 308; the sequence is SKKKHKNRNAGKQRSR.

It belongs to the OXA1/ALB3/YidC family. Type 2 subfamily.

It is found in the cell membrane. Functionally, required for the insertion and/or proper folding and/or complex formation of integral membrane proteins into the membrane. Involved in integration of membrane proteins that insert both dependently and independently of the Sec translocase complex, as well as at least some lipoproteins. The polypeptide is Membrane protein insertase YidC 1 (Streptococcus pneumoniae serotype 4 (strain ATCC BAA-334 / TIGR4)).